Consider the following 335-residue polypeptide: Flagellar P-ring protein (335 aa).

The N-terminal stretch at methionine 1–alanine 24 is a signal peptide.

This sequence belongs to the FlgI family. In terms of assembly, the basal body constitutes a major portion of the flagellar organelle and consists of four rings (L,P,S, and M) mounted on a central rod.

The protein localises to the periplasm. It is found in the bacterial flagellum basal body. Its function is as follows. Assembles around the rod to form the L-ring and probably protects the motor/basal body from shearing forces during rotation. The protein is Flagellar P-ring protein of Bdellovibrio bacteriovorus (strain ATCC 15356 / DSM 50701 / NCIMB 9529 / HD100).